The sequence spans 279 residues: Ribosomal RNA small subunit methyltransferase A (279 aa).

S-adenosyl-L-methionine contacts are provided by Leu-42, Gly-67, Glu-88, Asp-113, and Asn-129.

Belongs to the class I-like SAM-binding methyltransferase superfamily. rRNA adenine N(6)-methyltransferase family. RsmA subfamily.

The protein localises to the cytoplasm. It catalyses the reaction adenosine(1518)/adenosine(1519) in 16S rRNA + 4 S-adenosyl-L-methionine = N(6)-dimethyladenosine(1518)/N(6)-dimethyladenosine(1519) in 16S rRNA + 4 S-adenosyl-L-homocysteine + 4 H(+). Functionally, specifically dimethylates two adjacent adenosines (A1518 and A1519) in the loop of a conserved hairpin near the 3'-end of 16S rRNA in the 30S particle. May play a critical role in biogenesis of 30S subunits. In Thermotoga maritima (strain ATCC 43589 / DSM 3109 / JCM 10099 / NBRC 100826 / MSB8), this protein is Ribosomal RNA small subunit methyltransferase A.